A 170-amino-acid chain; its full sequence is Myelin-associated oligodendrocyte basic protein (170 aa).

The interval 69 to 170 (SRRATSPQKP…GSPTRAPRFW (102 aa)) is disordered. Over residues 82 to 92 (PAASPVVVRAP) the composition is skewed to low complexity. A phosphoserine mark is found at S85, S98, and S107. The stretch at 93-101 (PAKPKSPPR) is repeat 1. Pro residues predominate over residues 93–114 (PAKPKSPPRPAKPRSPPIPAKP). The 3 X 9 AA approximate tandem repeats stretch occupies residues 93–119 (PAKPKSPPRPAKPRSPPIPAKPRSPSR). Residues 105-110 (PRSPPI) form a 2; half-length repeat. Copy 3 of the repeat occupies 111 to 119 (PAKPRSPSR). Basic and acidic residues predominate over residues 118 to 130 (SRTERQPRPRPEV). A compositionally biased stretch (low complexity) spans 138–151 (KPPQKSKQPARSSP).

In terms of tissue distribution, expressed predominantly in oligodendrocytes, in CNS myelin of the cerebrum and spinal cord. No expression seen in sciatic nerve.

It is found in the cytoplasm. The protein resides in the perinuclear region. Its function is as follows. May play a role in compacting or stabilizing the myelin sheath, possibly by binding the negatively charged acidic phospholipids of the cytoplasmic membrane. The protein is Myelin-associated oligodendrocyte basic protein (Mobp) of Rattus norvegicus (Rat).